A 103-amino-acid polypeptide reads, in one-letter code: Large ribosomal subunit protein bL21 (103 aa).

Belongs to the bacterial ribosomal protein bL21 family. In terms of assembly, part of the 50S ribosomal subunit. Contacts protein L20.

Its function is as follows. This protein binds to 23S rRNA in the presence of protein L20. The polypeptide is Large ribosomal subunit protein bL21 (Polaromonas naphthalenivorans (strain CJ2)).